The sequence spans 70 residues: Turripeptide Ici9.2 (70 aa).

The first 20 residues, 1-20 (MKVYCLLLVLLVGLVSQAQG), serve as a signal peptide directing secretion. A Kazal-like domain is found at 21–70 (QLDKKCQTMCTMEYLPVCGSDGTTYPNKCTLTSTACVNQMDITVLHNGEC). 3 cysteine pairs are disulfide-bonded: Cys26/Cys56, Cys30/Cys49, and Cys38/Cys70.

It belongs to the conopeptide P-like superfamily. As to expression, expressed by the venom duct.

It localises to the secreted. Acts as a neurotoxin by inhibiting an ion channel. May also act as a serine protease inhibitor, since it possess the kazal serine protease inhibitor signature. In Iotyrris cingulifera (Sea snail), this protein is Turripeptide Ici9.2.